Reading from the N-terminus, the 1499-residue chain is Streptococcal surface protein B (1499 aa).

The first 37 residues, 1-37 (MQKREVFGFRKSKVAKTLCGAVLGAALIAIADQQVLA), serve as a signal peptide directing secretion. The interval 50–84 (AVTTTGNPATNLPEAQGEATEAASQSQAQAGSKDG) is disordered. Ag I/II A repeat units follow at residues 145–219 (KKTT…QKAN), 220–301 (EDSQ…KKAK), 302–383 (EDND…KQAN), and 384–465 (ATNE…KKDF). Disordered stretches follow at residues 689-709 (YADSSNAEKSRGARWDTSEWD), 763-907 (TAPT…TPPV), and 1409-1472 (RTTT…TGTN). Over residues 694-705 (NAEKSRGARWDT) the composition is skewed to basic and acidic residues. The span at 789–799 (PTPPVKTPDQP) shows a compositional bias: pro residues. Over residues 800 to 815 (EPSKPEEPTYETEKPL) the composition is skewed to basic and acidic residues. Residues 828 to 838 (PTPPVKIPDQP) show a composition bias toward pro residues. Residues 839–854 (EPSKPEEPTYETEKPL) show a composition bias toward basic and acidic residues. Composition is skewed to pro residues over residues 867–877 (PTPPVKTPDQP) and 888–907 (DPLPTPPLAPTPKQLPTPPV). Basic and acidic residues predominate over residues 1428 to 1450 (KPKDPDKPETPKEPKVPSPKVED). An LPXTG sorting signal motif is present at residues 1466 to 1470 (LPKTG). Pentaglycyl murein peptidoglycan amidated threonine is present on Thr-1469. A propeptide spans 1470 to 1499 (GTNDATYMPYLGLAALVGFLGLGLAKRKED) (removed by sortase).

Belongs to the antigen I/II family.

It localises to the secreted. The protein resides in the cell wall. The protein localises to the cell surface. Its function is as follows. Adhesin that mediates binding of bacteria to a variety of host cells. Plays a role in the bacterial invasion of dentinal tubules. A host immunostimulatory component, it modulates the innate immunity response. Plays a protective role against some antibiotics and cationic antimicrobial peptides (histatin-5, HTN3, but not beta-defensin 4A, DEFB4A). The sequence is that of Streptococcal surface protein B from Streptococcus gordonii (strain Challis / ATCC 35105 / BCRC 15272 / CH1 / DL1 / V288).